A 158-amino-acid chain; its full sequence is Transcription elongation factor GreA (158 aa).

This sequence belongs to the GreA/GreB family.

Necessary for efficient RNA polymerase transcription elongation past template-encoded arresting sites. The arresting sites in DNA have the property of trapping a certain fraction of elongating RNA polymerases that pass through, resulting in locked ternary complexes. Cleavage of the nascent transcript by cleavage factors such as GreA or GreB allows the resumption of elongation from the new 3'terminus. GreA releases sequences of 2 to 3 nucleotides. This is Transcription elongation factor GreA from Bacillus licheniformis (strain ATCC 14580 / DSM 13 / JCM 2505 / CCUG 7422 / NBRC 12200 / NCIMB 9375 / NCTC 10341 / NRRL NRS-1264 / Gibson 46).